The chain runs to 145 residues: Cytochrome c550 (145 aa).

A signal peptide spans 1-24 (MNKNNVLRGLLVLAGLSLSSLALA). The 83-residue stretch at 60–142 (LAVEIGASAY…AIRSYLESVH (83 aa)) folds into the Cytochrome c domain. Cysteine 73, cysteine 76, histidine 77, and methionine 119 together coordinate heme c.

As to quaternary structure, monomer. Interacts with the quinoprotein ethanol dehydrogenase (QEDH) ExaA. Post-translationally, binds 1 heme group per subunit.

The protein resides in the periplasm. The protein operates within alcohol metabolism; ethanol degradation; acetate from ethanol. Is an essential component of the ethanol oxidation system that allows P.aeruginosa to grow on ethanol as the sole carbon and energy source. Is the direct electron acceptor of the quinoprotein ethanol dehydrogenase (QEDH). The sequence is that of Cytochrome c550 from Pseudomonas aeruginosa (strain ATCC 15692 / DSM 22644 / CIP 104116 / JCM 14847 / LMG 12228 / 1C / PRS 101 / PAO1).